We begin with the raw amino-acid sequence, 549 residues long: Glucose-6-phosphate isomerase (549 aa).

Catalysis depends on E355, which acts as the Proton donor. Active-site residues include H386 and K514.

This sequence belongs to the GPI family.

Its subcellular location is the cytoplasm. It carries out the reaction alpha-D-glucose 6-phosphate = beta-D-fructose 6-phosphate. It functions in the pathway carbohydrate biosynthesis; gluconeogenesis. Its pathway is carbohydrate degradation; glycolysis; D-glyceraldehyde 3-phosphate and glycerone phosphate from D-glucose: step 2/4. Catalyzes the reversible isomerization of glucose-6-phosphate to fructose-6-phosphate. The sequence is that of Glucose-6-phosphate isomerase from Salmonella schwarzengrund (strain CVM19633).